Consider the following 361-residue polypeptide: Phospho-N-acetylmuramoyl-pentapeptide-transferase (361 aa).

A run of 10 helical transmembrane segments spans residues 25 to 45, 73 to 93, 97 to 117, 132 to 152, 167 to 187, 200 to 220, 240 to 260, 264 to 284, 289 to 309, and 338 to 358; these read RAVM…PWVI, TMGG…WADL, YVWL…YDDW, FKMA…IATA, TVAY…VIVG, GLAA…AYVA, VVVF…FNAY, VFMG…VAVI, IVLF…MIQV, and QVVV…LSTL.

Belongs to the glycosyltransferase 4 family. MraY subfamily. The cofactor is Mg(2+).

The protein localises to the cell inner membrane. The enzyme catalyses UDP-N-acetyl-alpha-D-muramoyl-L-alanyl-gamma-D-glutamyl-meso-2,6-diaminopimeloyl-D-alanyl-D-alanine + di-trans,octa-cis-undecaprenyl phosphate = di-trans,octa-cis-undecaprenyl diphospho-N-acetyl-alpha-D-muramoyl-L-alanyl-D-glutamyl-meso-2,6-diaminopimeloyl-D-alanyl-D-alanine + UMP. It functions in the pathway cell wall biogenesis; peptidoglycan biosynthesis. Its function is as follows. Catalyzes the initial step of the lipid cycle reactions in the biosynthesis of the cell wall peptidoglycan: transfers peptidoglycan precursor phospho-MurNAc-pentapeptide from UDP-MurNAc-pentapeptide onto the lipid carrier undecaprenyl phosphate, yielding undecaprenyl-pyrophosphoryl-MurNAc-pentapeptide, known as lipid I. This Chromobacterium violaceum (strain ATCC 12472 / DSM 30191 / JCM 1249 / CCUG 213 / NBRC 12614 / NCIMB 9131 / NCTC 9757 / MK) protein is Phospho-N-acetylmuramoyl-pentapeptide-transferase.